Reading from the N-terminus, the 75-residue chain is Small ribosomal subunit protein eS17 (75 aa).

It belongs to the eukaryotic ribosomal protein eS17 family.

This is Small ribosomal subunit protein eS17 from Thermoplasma acidophilum (strain ATCC 25905 / DSM 1728 / JCM 9062 / NBRC 15155 / AMRC-C165).